The primary structure comprises 1024 residues: Probable alpha-mannosidase At5g13980 (1024 aa).

The N-terminal stretch at 1–21 is a signal peptide; that stretch reads MDLAKFLCWIVLLLGISLVES. An N-linked (GlcNAc...) asparagine glycan is attached at Asn-27. Residues His-46 and Asp-48 each coordinate Zn(2+). Residue Asn-63 is glycosylated (N-linked (GlcNAc...) asparagine). Asp-168 lines the Zn(2+) pocket. A glycan (N-linked (GlcNAc...) asparagine) is linked at Asn-278. His-410 lines the Zn(2+) pocket. A disulfide bridge connects residues Cys-461 and Cys-469. Asn-465, Asn-475, Asn-637, Asn-658, Asn-733, and Asn-823 each carry an N-linked (GlcNAc...) asparagine glycan. Cys-827 and Cys-832 are disulfide-bonded.

Belongs to the glycosyl hydrolase 38 family. In terms of assembly, homodimer. Requires Zn(2+) as cofactor.

The catalysed reaction is Hydrolysis of terminal, non-reducing alpha-D-mannose residues in alpha-D-mannosides.. Functionally, liberates mannose from p-nitrophenyl-alpha-D-mannoside in vitro. The protein is Probable alpha-mannosidase At5g13980 of Arabidopsis thaliana (Mouse-ear cress).